We begin with the raw amino-acid sequence, 1062 residues long: Exportin-T (1062 aa).

This sequence belongs to the exportin family.

It is found in the nucleus. The protein resides in the cytoplasm. TRNA nucleus export receptor which facilitates tRNA translocation across the nuclear pore complex. Involved in pre-tRNA splicing, probably by affecting the interaction of pre-tRNA with splicing endonuclease. In Vanderwaltozyma polyspora (strain ATCC 22028 / DSM 70294 / BCRC 21397 / CBS 2163 / NBRC 10782 / NRRL Y-8283 / UCD 57-17) (Kluyveromyces polysporus), this protein is Exportin-T (LOS1).